Here is a 427-residue protein sequence, read N- to C-terminus: Citrate synthase (427 aa).

Active-site residues include H306 and D363.

Belongs to the citrate synthase family. As to quaternary structure, homohexamer.

It catalyses the reaction oxaloacetate + acetyl-CoA + H2O = citrate + CoA + H(+). Its pathway is carbohydrate metabolism; tricarboxylic acid cycle; isocitrate from oxaloacetate: step 1/2. With respect to regulation, allosterically inhibited by NADH. The protein is Citrate synthase (gltA) of Salmonella typhimurium (strain LT2 / SGSC1412 / ATCC 700720).